Reading from the N-terminus, the 44-residue chain is Small, acid-soluble spore protein N (44 aa).

Residues 1–44 (MGNPKKNSKDFVPNHIGTQSKKAGGNKGKQMQDTTGKQPIVDNG) are disordered.

This sequence belongs to the SspN family.

It is found in the spore core. This Bacillus cytotoxicus (strain DSM 22905 / CIP 110041 / 391-98 / NVH 391-98) protein is Small, acid-soluble spore protein N.